A 165-amino-acid polypeptide reads, in one-letter code: UPF0262 protein Sala_0765 (165 aa).

Belongs to the UPF0262 family.

The polypeptide is UPF0262 protein Sala_0765 (Sphingopyxis alaskensis (strain DSM 13593 / LMG 18877 / RB2256) (Sphingomonas alaskensis)).